The following is a 517-amino-acid chain: Pseudaminic acid cytidylyltransferase and UDP-2,4-diacetamido-2,4,6-trideoxy-beta-L-altropyranose hydrolase (517 aa).

The interval 1-208 (MRAIAIVLAR…ELSPLEVQDI (208 aa)) is pseudaminic acid cytidylyltransferase. Residues 209–517 (AHFRRFRISQ…EGALREFLEI (309 aa)) form a UDP-2,4-diacetamido-2,4,6-trideoxy-beta-L-altropyranose hydrolase region. The active-site Proton acceptor; for UDP-2,4-diacetamido-2,4,6-trideoxy-beta-L-altropyranose hydrolase activity is the His-244.

This sequence in the N-terminal section; belongs to the CMP-NeuNAc synthase family. In the C-terminal section; belongs to the PseG family. As to quaternary structure, monomer. Requires Mg(2+) as cofactor.

The enzyme catalyses UDP-2,4-diacetamido-2,4,6-trideoxy-beta-L-altrose + H2O = 2,4-diacetamido-2,4,6-trideoxy-beta-L-altrose + UDP + H(+). It catalyses the reaction pseudaminate + CTP = CMP-pseudaminate + diphosphate. In terms of biological role, catalyzes the fourth and sixth steps in the biosynthesis of pseudaminic acid, a sialic-acid-like sugar that is used to modify flagellin. The C-terminus mediates the fourth step of the pathway and catalyzes the removal of UDP from C-1 of UDP-2,4-diacetamido-2,4,6-trideoxy-beta-L-altropyranose forming 2,4-diacetamido-2,4,6-trideoxy-beta-L-altropyranose. The N-terminal part mediates the last step of the pathway by mediating activation of pseudaminic acid with CMP by forming CMP-pseudaminic acid. This chain is Pseudaminic acid cytidylyltransferase and UDP-2,4-diacetamido-2,4,6-trideoxy-beta-L-altropyranose hydrolase, found in Helicobacter pylori (strain ATCC 700392 / 26695) (Campylobacter pylori).